A 273-amino-acid polypeptide reads, in one-letter code: Large ribosomal subunit protein uL2cz/uL2cy (273 aa).

2 disordered regions span residues methionine 1–serine 20 and asparagine 224–glycine 254.

This sequence belongs to the universal ribosomal protein uL2 family. As to quaternary structure, part of the 50S ribosomal subunit.

The protein resides in the plastid. It is found in the chloroplast. The sequence is that of Large ribosomal subunit protein uL2cz/uL2cy (rpl2-A) from Nuphar advena (Common spatterdock).